A 204-amino-acid chain; its full sequence is uncharacterized protein (204 aa).

This is an uncharacterized protein from Acinetobacter calcoaceticus.